A 412-amino-acid polypeptide reads, in one-letter code: Serine hydroxymethyltransferase (412 aa).

(6S)-5,6,7,8-tetrahydrofolate is bound by residues Leu-117 and 121 to 123 (GHL). Lys-226 carries the post-translational modification N6-(pyridoxal phosphate)lysine.

It belongs to the SHMT family. In terms of assembly, homodimer. Pyridoxal 5'-phosphate is required as a cofactor.

The protein resides in the cytoplasm. The enzyme catalyses (6R)-5,10-methylene-5,6,7,8-tetrahydrofolate + glycine + H2O = (6S)-5,6,7,8-tetrahydrofolate + L-serine. It participates in one-carbon metabolism; tetrahydrofolate interconversion. It functions in the pathway amino-acid biosynthesis; glycine biosynthesis; glycine from L-serine: step 1/1. Functionally, catalyzes the reversible interconversion of serine and glycine with tetrahydrofolate (THF) serving as the one-carbon carrier. This reaction serves as the major source of one-carbon groups required for the biosynthesis of purines, thymidylate, methionine, and other important biomolecules. Also exhibits THF-independent aldolase activity toward beta-hydroxyamino acids, producing glycine and aldehydes, via a retro-aldol mechanism. This Staphylococcus haemolyticus (strain JCSC1435) protein is Serine hydroxymethyltransferase.